A 421-amino-acid polypeptide reads, in one-letter code: UDP-N-acetylglucosamine 1-carboxyvinyltransferase (421 aa).

22 to 23 is a phosphoenolpyruvate binding site; it reads KN. Arg-93 lines the UDP-N-acetyl-alpha-D-glucosamine pocket. Cys-117 serves as the catalytic Proton donor. The residue at position 117 (Cys-117) is a 2-(S-cysteinyl)pyruvic acid O-phosphothioketal. UDP-N-acetyl-alpha-D-glucosamine-binding positions include 122–126, Asp-308, and Ile-330; that span reads RPVDL.

Belongs to the EPSP synthase family. MurA subfamily.

Its subcellular location is the cytoplasm. It catalyses the reaction phosphoenolpyruvate + UDP-N-acetyl-alpha-D-glucosamine = UDP-N-acetyl-3-O-(1-carboxyvinyl)-alpha-D-glucosamine + phosphate. Its pathway is cell wall biogenesis; peptidoglycan biosynthesis. Cell wall formation. Adds enolpyruvyl to UDP-N-acetylglucosamine. The sequence is that of UDP-N-acetylglucosamine 1-carboxyvinyltransferase from Pseudomonas savastanoi pv. phaseolicola (strain 1448A / Race 6) (Pseudomonas syringae pv. phaseolicola (strain 1448A / Race 6)).